Consider the following 378-residue polypeptide: Fructose-1,6-bisphosphatase class 1 2 (378 aa).

Positions 98, 120, 122, and 123 each coordinate Mg(2+). Residues 123-126 and N227 each bind substrate; that span reads DGSS. Position 299 (E299) interacts with Mg(2+).

Belongs to the FBPase class 1 family. In terms of assembly, homotetramer. The cofactor is Mg(2+).

The protein resides in the cytoplasm. The catalysed reaction is beta-D-fructose 1,6-bisphosphate + H2O = beta-D-fructose 6-phosphate + phosphate. It participates in carbohydrate biosynthesis; gluconeogenesis. The protein is Fructose-1,6-bisphosphatase class 1 2 of Paraburkholderia xenovorans (strain LB400).